The chain runs to 210 residues: Cdc42 effector protein 2 (210 aa).

N-acetylserine is present on Ser-2. Residues 30 to 44 form the CRIB domain; the sequence is ISPPLGDFRHTIHIG. Phosphoserine occurs at positions 31, 101, and 141. The segment at 122-171 is disordered; sequence PTAQAPPKPPRLHLETPQPSPQEGGSVDIWRIPETGSPNSGLTPESGAEE.

Belongs to the BORG/CEP family. In terms of assembly, interacts with RHOQ and CDC42 in a GTP-dependent manner, and with SEPT7. As to expression, highly expressed in the heart. Weakly expressed in the pancreas and liver.

It is found in the endomembrane system. It localises to the cytoplasm. Its subcellular location is the cytoskeleton. In terms of biological role, probably involved in the organization of the actin cytoskeleton. May act downstream of CDC42 to induce actin filament assembly leading to cell shape changes. Induces pseudopodia formation in fibroblasts in a CDC42-dependent manner. The chain is Cdc42 effector protein 2 (CDC42EP2) from Homo sapiens (Human).